Here is a 66-residue protein sequence, read N- to C-terminus: Large ribosomal subunit protein bL31 (66 aa).

Positions 16, 18, 36, and 39 each coordinate Zn(2+).

It belongs to the bacterial ribosomal protein bL31 family. Type A subfamily. In terms of assembly, part of the 50S ribosomal subunit. Zn(2+) is required as a cofactor.

Its function is as follows. Binds the 23S rRNA. This chain is Large ribosomal subunit protein bL31, found in Anoxybacillus flavithermus (strain DSM 21510 / WK1).